Here is a 362-residue protein sequence, read N- to C-terminus: Probable non-structural 41.0 kDa protein (362 aa).

The tract at residues 341-362 (MNAAAPSAPTPTELPVFSPPSS) is disordered.

In Maize rough dwarf virus (MRDV), this protein is Probable non-structural 41.0 kDa protein (S6).